Consider the following 399-residue polypeptide: GDP-D-glucose phosphorylase 1 (399 aa).

His237 serves as the catalytic Tele-GMP-histidine intermediate.

It belongs to the GDPGP1 family.

Its subcellular location is the cytoplasm. It carries out the reaction GDP-alpha-D-glucose + phosphate = alpha-D-glucose 1-phosphate + GDP + H(+). Specific and highly efficient GDP-D-glucose phosphorylase regulating the levels of GDP-D-glucose in cells. This Xenopus laevis (African clawed frog) protein is GDP-D-glucose phosphorylase 1 (gdpgp1).